The chain runs to 121 residues: uncharacterized protein (121 aa).

The region spanning 47–101 (SEVPHYHAEHDLTFTVLKGKGELYLEGEKKKLKEGDWAFIPKGAVHFYRNTSELS) is the Cupin type-2 domain.

This is an uncharacterized protein from Aquifex aeolicus (strain VF5).